The following is a 353-amino-acid chain: Photosystem II D2 protein (353 aa).

The residue at position 2 (T2) is an N-acetylthreonine. Residue T2 is modified to Phosphothreonine. The chain crosses the membrane as a helical span at residues 41-61 (CAYFALGGWFTGTTFVTSWYT). H118 is a binding site for chlorophyll a. A helical transmembrane segment spans residues 125-141 (GFMLRQFELARSVQLRP). Residues Q130 and N143 each contribute to the pheophytin a site. The helical transmembrane segment at 153-166 (VFVSVFLIYPLGQS) threads the bilayer. Residue H198 participates in chlorophyll a binding. The helical transmembrane segment at 208–228 (AALLCAIHGATVENTLFEDGD) threads the bilayer. Positions 215 and 262 each coordinate a plastoquinone. Fe cation is bound at residue H215. A Fe cation-binding site is contributed by H269. A helical transmembrane segment spans residues 279–295 (GLWMSALGVVGLALNLR).

Belongs to the reaction center PufL/M/PsbA/D family. In terms of assembly, PSII is composed of 1 copy each of membrane proteins PsbA, PsbB, PsbC, PsbD, PsbE, PsbF, PsbH, PsbI, PsbJ, PsbK, PsbL, PsbM, PsbT, PsbX, PsbY, PsbZ, Psb30/Ycf12, at least 3 peripheral proteins of the oxygen-evolving complex and a large number of cofactors. It forms dimeric complexes. The D1/D2 heterodimer binds P680, chlorophylls that are the primary electron donor of PSII, and subsequent electron acceptors. It shares a non-heme iron and each subunit binds pheophytin, quinone, additional chlorophylls, carotenoids and lipids. There is also a Cl(-1) ion associated with D1 and D2, which is required for oxygen evolution. The PSII complex binds additional chlorophylls, carotenoids and specific lipids. is required as a cofactor.

It is found in the plastid. It localises to the chloroplast thylakoid membrane. The enzyme catalyses 2 a plastoquinone + 4 hnu + 2 H2O = 2 a plastoquinol + O2. In terms of biological role, photosystem II (PSII) is a light-driven water:plastoquinone oxidoreductase that uses light energy to abstract electrons from H(2)O, generating O(2) and a proton gradient subsequently used for ATP formation. It consists of a core antenna complex that captures photons, and an electron transfer chain that converts photonic excitation into a charge separation. The D1/D2 (PsbA/PsbD) reaction center heterodimer binds P680, the primary electron donor of PSII as well as several subsequent electron acceptors. D2 is needed for assembly of a stable PSII complex. In Citrus sinensis (Sweet orange), this protein is Photosystem II D2 protein.